A 352-amino-acid chain; its full sequence is UDP-N-acetylglucosamine--N-acetylmuramyl-(pentapeptide) pyrophosphoryl-undecaprenol N-acetylglucosamine transferase (352 aa).

Residues 11–13, Asn-120, Arg-161, Ser-188, and Gln-286 contribute to the UDP-N-acetyl-alpha-D-glucosamine site; that span reads TGG.

The protein belongs to the glycosyltransferase 28 family. MurG subfamily.

It is found in the cell inner membrane. The enzyme catalyses di-trans,octa-cis-undecaprenyl diphospho-N-acetyl-alpha-D-muramoyl-L-alanyl-D-glutamyl-meso-2,6-diaminopimeloyl-D-alanyl-D-alanine + UDP-N-acetyl-alpha-D-glucosamine = di-trans,octa-cis-undecaprenyl diphospho-[N-acetyl-alpha-D-glucosaminyl-(1-&gt;4)]-N-acetyl-alpha-D-muramoyl-L-alanyl-D-glutamyl-meso-2,6-diaminopimeloyl-D-alanyl-D-alanine + UDP + H(+). The protein operates within cell wall biogenesis; peptidoglycan biosynthesis. Its function is as follows. Cell wall formation. Catalyzes the transfer of a GlcNAc subunit on undecaprenyl-pyrophosphoryl-MurNAc-pentapeptide (lipid intermediate I) to form undecaprenyl-pyrophosphoryl-MurNAc-(pentapeptide)GlcNAc (lipid intermediate II). The sequence is that of UDP-N-acetylglucosamine--N-acetylmuramyl-(pentapeptide) pyrophosphoryl-undecaprenol N-acetylglucosamine transferase from Prochlorococcus marinus (strain NATL2A).